The following is a 320-amino-acid chain: Adhesin MafA 1/4 (320 aa).

The signal sequence occupies residues 1-18; that stretch reads MRARLLIPILFSVFILSA. Cys-19 carries N-palmitoyl cysteine lipidation. The S-diacylglycerol cysteine moiety is linked to residue Cys-19. A disordered region spans residues 287–320; it reads NHTGNSAPSVEADNSHEGYGYSDEAVRQHRQGQP.

The protein belongs to the MafA family.

It is found in the cell outer membrane. The protein is Adhesin MafA 1/4 (mafA1) of Neisseria gonorrhoeae (strain ATCC 700825 / FA 1090).